Consider the following 317-residue polypeptide: Tenomodulin (317 aa).

Topologically, residues 1 to 30 are cytoplasmic; it reads MAKNPPENCEDCHILNAEAFKSKKICKSLK. The helical; Signal-anchor for type II membrane protein transmembrane segment at 31–50 threads the bilayer; sequence ICGLVFGILALTLIVLFWGS. Residues 51 to 317 are Extracellular-facing; the sequence is KHFWPEVPKK…WWVARMLGRV (267 aa). One can recognise a BRICHOS domain in the interval 93–186; the sequence is GNGTDETLEV…ICDNVTMYWI (94 aa). Asparagine 94 is a glycosylation site (N-linked (GlcNAc...) asparagine). Cysteine 120 and cysteine 178 are oxidised to a cystine. Asparagine 180 is a glycosylation site (N-linked (GlcNAc...) asparagine). A Phosphoserine modification is found at serine 239.

Belongs to the chondromodulin-1 family. Highly expressed in hypovascular connective tissues such as tendons. Also has strong expression in adipose tissue.

It localises to the membrane. The protein resides in the nucleus envelope. It is found in the cytoplasm. Functionally, may be an angiogenesis inhibitor. This Homo sapiens (Human) protein is Tenomodulin (TNMD).